Reading from the N-terminus, the 149-residue chain is Calmodulin (149 aa).

Alanine 2 carries the N-acetylalanine modification. EF-hand domains follow at residues 8–43 (DQISEFKEAFSLFDKDGDGCITTKELGTVMRSLGQN), 44–79 (PTEAELQDMINEVDADGNGTIDFPEFLNLMARKMKD), 81–116 (DSEEELKEAFRVFDKDQNGFISAAELRHVMTNLGEK), and 117–149 (LTDEEVDEMIREADVDGDGQINYDEFVKVMMAK). Positions 21, 23, 25, 27, 32, 57, 59, 61, 63, 68, 94, 96, 98, and 105 each coordinate Ca(2+). Lysine 116 carries the N6,N6,N6-trimethyllysine modification. Ca(2+)-binding residues include aspartate 130, aspartate 132, aspartate 134, glutamine 136, and glutamate 141.

It belongs to the calmodulin family.

In terms of biological role, calmodulin mediates the control of a large number of enzymes, ion channels and other proteins by Ca(2+). Among the enzymes to be stimulated by the calmodulin-Ca(2+) complex are a number of protein kinases and phosphatases. The polypeptide is Calmodulin (CCM1) (Capsicum annuum (Capsicum pepper)).